A 679-amino-acid polypeptide reads, in one-letter code: NADPH--cytochrome P450 reductase (679 aa).

Topologically, residues 1–21 are lumenal; sequence MASEQTIDGAAAIPSGGGDEP. The chain crosses the membrane as a helical span at residues 22-42; sequence FLGLLDVALLAVLIGGAAFYF. Residues 43 to 679 lie on the Cytoplasmic side of the membrane; the sequence is LRSRKKEEEP…QKRYSADVWS (637 aa). In terms of domain architecture, Flavodoxin-like spans 84 to 228; the sequence is LVVFYGSQTG…DFITWKDRFW (145 aa). Residues 90-95, 142-145, 177-186, and Asp-212 each bind FMN; these read SQTGTG, ATYG, and LGNKTYEHYN. An FAD-binding FR-type domain is found at 283–523; it reads KNPFLAPIKV…FIRKSQFRLP (241 aa). Arg-302 serves as a coordination point for NADP(+). Residues 458 to 461, 476 to 478, Tyr-482, and 492 to 495 each bind FAD; these read RYYS, TAV, and GVAT. NADP(+) contacts are provided by residues Thr-537, 597 to 598, 603 to 607, and Asp-640; these read SR and KVYVQ. An FAD-binding site is contributed by Trp-678.

It belongs to the NADPH--cytochrome P450 reductase family. This sequence in the N-terminal section; belongs to the flavodoxin family. In the C-terminal section; belongs to the flavoprotein pyridine nucleotide cytochrome reductase family. Interacts with sturkopf. FAD serves as cofactor. Requires FMN as cofactor. High in antennae.

It localises to the endoplasmic reticulum membrane. The catalysed reaction is 2 oxidized [cytochrome P450] + NADPH = 2 reduced [cytochrome P450] + NADP(+) + H(+). Functionally, this enzyme is required for electron transfer from NADP to cytochrome p450 in microsomes. It can also provide electron transfer to heme oxygenase and cytochrome b5. May function to clear the olfactory organ (antennae) from accumulating chemicals. This chain is NADPH--cytochrome P450 reductase (Cpr), found in Drosophila melanogaster (Fruit fly).